Consider the following 413-residue polypeptide: FAD-dependent monooxygenase vrtH (413 aa).

A signal peptide spans 1–23 (MQRANHTRPVLIIGAGLSGLAIG). Asn-5 carries an N-linked (GlcNAc...) asparagine glycan. Positions 37 and 48 each coordinate FAD. A glycan (N-linked (GlcNAc...) asparagine) is linked at Asn-94. Arg-120 lines the FAD pocket. A glycan (N-linked (GlcNAc...) asparagine) is linked at Asn-232. FAD is bound by residues Asp-327 and Gly-340.

It belongs to the paxM FAD-dependent monooxygenase family. It depends on FAD as a cofactor.

Its pathway is secondary metabolite biosynthesis; terpenoid biosynthesis. In terms of biological role, FAD-dependent monooxygenase; part of the gene cluster that mediates the biosynthesis of viridicatumtoxin, a tetracycline-like fungal meroterpenoid with a unique, fused spirobicyclic ring system. The first step of the pathway is the production of the malonamoyl-CoA starter unit for the polyketide synthase vrtA. The aldolase vrtJ may be involved in the synthesis of the malonamate substrate for malonamoyl-CoA synthetase vrtB. The polyketide synthase vrtA then may utilize the malonamoyl-CoA starter unit, followed by sequential condensation of eight malonyl-CoA units to form the polyketide backbone. The cyclization of the last ring could be mediated by the lactamase-like protein vrtG. The proposed post-PKS tailoring steps are a hydroxylation at C5 catalyzed the cytochrome P450 monooxygenase vrtE, a hydroxylation at C12a catalyzed by VrtH and/or VrtI, and an O-methylation by the O-methyltransferase vrtF. VrtC is then proposed to catalyze the transfer of a geranyl group synthesized by vrtD to the aromatic C ring of the tetracyclic polyketide intermediate of viridicatumtoxin to yield previridicatumtoxin. Finally, the cytochrome P450 monooxygenase vrtK catalyzes the spirocyclization of the geranyl moiety of previridicatumtoxin to afford viridicatumtoxin. This Penicillium aethiopicum protein is FAD-dependent monooxygenase vrtH.